We begin with the raw amino-acid sequence, 163 residues long: MQITYFAGGCFWCVEAIFQRIEGVVKLTSGYCNGNTVDPTYQDICTGTTGHAEVVKVEFYELKVSFKTLLNIFFEIHNPTTKNQQGNDRGTQYRSAIFYTNDEQQSQAIDMVNQMSDKIVTQIIKLDVFYPAENYHQNYFNNNSSQPYCQMLIAPKLNKYFNQ.

Cysteine 10 is a catalytic residue.

It belongs to the MsrA Met sulfoxide reductase family.

It carries out the reaction L-methionyl-[protein] + [thioredoxin]-disulfide + H2O = L-methionyl-(S)-S-oxide-[protein] + [thioredoxin]-dithiol. It catalyses the reaction [thioredoxin]-disulfide + L-methionine + H2O = L-methionine (S)-S-oxide + [thioredoxin]-dithiol. In terms of biological role, has an important function as a repair enzyme for proteins that have been inactivated by oxidation. Catalyzes the reversible oxidation-reduction of methionine sulfoxide in proteins to methionine. This Ruthia magnifica subsp. Calyptogena magnifica protein is Peptide methionine sulfoxide reductase MsrA.